We begin with the raw amino-acid sequence, 304 residues long: Non-specific ribonucleoside hydrolase RihC (304 aa).

His233 is a catalytic residue.

The protein belongs to the IUNH family. RihC subfamily.

Functionally, hydrolyzes both purine and pyrimidine ribonucleosides with a broad-substrate specificity. This is Non-specific ribonucleoside hydrolase RihC from Escherichia coli O6:H1 (strain CFT073 / ATCC 700928 / UPEC).